A 249-amino-acid polypeptide reads, in one-letter code: Probable transcriptional regulatory protein Csal_1845 (249 aa).

The protein belongs to the TACO1 family.

The protein localises to the cytoplasm. The polypeptide is Probable transcriptional regulatory protein Csal_1845 (Chromohalobacter salexigens (strain ATCC BAA-138 / DSM 3043 / CIP 106854 / NCIMB 13768 / 1H11)).